The chain runs to 138 residues: Large ribosomal subunit protein uL16 (138 aa).

It belongs to the universal ribosomal protein uL16 family. In terms of assembly, part of the 50S ribosomal subunit.

Its function is as follows. Binds 23S rRNA and is also seen to make contacts with the A and possibly P site tRNAs. The protein is Large ribosomal subunit protein uL16 of Gluconacetobacter diazotrophicus (strain ATCC 49037 / DSM 5601 / CCUG 37298 / CIP 103539 / LMG 7603 / PAl5).